Here is a 168-residue protein sequence, read N- to C-terminus: G/U mismatch-specific DNA glycosylase (168 aa).

This sequence belongs to the uracil-DNA glycosylase (UDG) superfamily. TDG/mug family. In terms of assembly, binds DNA as a monomer.

It is found in the cytoplasm. The catalysed reaction is Specifically hydrolyzes mismatched double-stranded DNA and polynucleotides, releasing free uracil.. In terms of biological role, excises ethenocytosine and uracil, which can arise by alkylation or deamination of cytosine, respectively, from the corresponding mispairs with guanine in ds-DNA. It is capable of hydrolyzing the carbon-nitrogen bond between the sugar-phosphate backbone of the DNA and the mispaired base. The complementary strand guanine functions in substrate recognition. Required for DNA damage lesion repair in stationary-phase cells. This chain is G/U mismatch-specific DNA glycosylase, found in Escherichia coli O139:H28 (strain E24377A / ETEC).